Here is a 956-residue protein sequence, read N- to C-terminus: Bifunctional glutamine synthetase adenylyltransferase/adenylyl-removing enzyme (956 aa).

The interval 1 to 450 (MENMSEQALP…YFKETVGGQE (450 aa)) is adenylyl removase. The segment at 456 to 956 (EQWTAQLWSL…IYEQVLNNGQ (501 aa)) is adenylyl transferase.

Belongs to the GlnE family. The cofactor is Mg(2+).

The catalysed reaction is [glutamine synthetase]-O(4)-(5'-adenylyl)-L-tyrosine + phosphate = [glutamine synthetase]-L-tyrosine + ADP. It catalyses the reaction [glutamine synthetase]-L-tyrosine + ATP = [glutamine synthetase]-O(4)-(5'-adenylyl)-L-tyrosine + diphosphate. Functionally, involved in the regulation of glutamine synthetase GlnA, a key enzyme in the process to assimilate ammonia. When cellular nitrogen levels are high, the C-terminal adenylyl transferase (AT) inactivates GlnA by covalent transfer of an adenylyl group from ATP to specific tyrosine residue of GlnA, thus reducing its activity. Conversely, when nitrogen levels are low, the N-terminal adenylyl removase (AR) activates GlnA by removing the adenylyl group by phosphorolysis, increasing its activity. The regulatory region of GlnE binds the signal transduction protein PII (GlnB) which indicates the nitrogen status of the cell. The polypeptide is Bifunctional glutamine synthetase adenylyltransferase/adenylyl-removing enzyme (Shewanella loihica (strain ATCC BAA-1088 / PV-4)).